Reading from the N-terminus, the 1023-residue chain is 2-oxoglutarate dehydrogenase complex component E1 (1023 aa).

A mitochondrion-targeting transit peptide spans 1 to 40 (MFHLRTCAAKLRPLTASQTVKTFSQNKPAAIRTFQQIRCY). K74 carries the N6-succinyllysine modification. Position 100 is a phosphoserine (S100). Ca(2+) is bound by residues H143, D156, and D158. R312 serves as a coordination point for thiamine diphosphate. N6-acetyllysine is present on K401. The thiamine diphosphate site is built by D411, N444, and I446. The Mg(2+) site is built by D411, N444, and I446. A Glycyl lysine isopeptide (Lys-Gly) (interchain with G-Cter in ubiquitin) cross-link involves residue K534. Residue K564 is modified to N6-succinyllysine. Q676 is a binding site for thiamine diphosphate. Positions 933–939 (LSPFPFD) are recognized by alloreactive CD8 cytotoxic T-lymphocytes in association with a class I MHC protein. K970 carries the post-translational modification N6-acetyllysine.

The protein belongs to the alpha-ketoglutarate dehydrogenase family. Homodimer. The 2-oxoglutarate dehydrogenase complex is composed of OGDH (2-oxoglutarate dehydrogenase; E1), DLST (dihydrolipoamide succinyltransferase; E2), DLD (dihydrolipoamide dehydrogenase; E3) and the assembly factor KGD4. It contains multiple copies of the three enzymatic components (E1, E2 and E3). In the nucleus, the 2-oxoglutarate dehydrogenase complex associates with KAT2A. Interacts with ABHD11; this interaction maintains the functional lipoylation of the 2-oxoglutarate dehydrogenase complex. Requires thiamine diphosphate as cofactor. Mg(2+) is required as a cofactor.

Its subcellular location is the mitochondrion. The protein localises to the nucleus. It catalyses the reaction N(6)-[(R)-lipoyl]-L-lysyl-[protein] + 2-oxoglutarate + H(+) = N(6)-[(R)-S(8)-succinyldihydrolipoyl]-L-lysyl-[protein] + CO2. Its activity is regulated as follows. Calcium ions and ADP stimulate, whereas ATP and NADH reduce catalytic activity. Its function is as follows. 2-oxoglutarate dehydrogenase (E1o) component of the 2-oxoglutarate dehydrogenase complex (OGDHC). Participates in the first step, rate limiting for the overall conversion of 2-oxoglutarate to succinyl-CoA and CO(2) catalyzed by the whole OGDHC. Catalyzes the irreversible decarboxylation of 2-oxoglutarate (alpha-ketoglutarate) via the thiamine diphosphate (ThDP) cofactor and subsequent transfer of the decarboxylated acyl intermediate on an oxidized dihydrolipoyl group that is covalently amidated to the E2 enzyme (dihydrolipoyllysine-residue succinyltransferase or DLST). Plays a key role in the Krebs (citric acid) cycle, which is a common pathway for oxidation of fuel molecules, including carbohydrates, fatty acids, and amino acids. Can catalyze the decarboxylation of 2-oxoadipate in vitro, but at a much lower rate than 2-oxoglutarate. Mainly active in the mitochondrion. A fraction of the 2-oxoglutarate dehydrogenase complex also localizes in the nucleus and is required for lysine succinylation of histones: associates with KAT2A on chromatin and provides succinyl-CoA to histone succinyltransferase KAT2A. The protein is 2-oxoglutarate dehydrogenase complex component E1 of Mus musculus (Mouse).